Consider the following 749-residue polypeptide: cGMP-dependent protein kinase egl-4 (749 aa).

The stretch at 30–96 (EAHELQKLIP…LEQKAQSAAS (67 aa)) forms a coiled coil. Residues 87–111 (LEQKAQSAASPGQPPSPSPRTDQLG) form a disordered region. 3',5'-cyclic GMP-binding positions include 234–237 (GELA), 244–245 (RT), R349, 358–361 (GERA), 368–369 (RT), and Y403. The region spanning 438 to 698 (VKRLATLGVG…VNDIRKHRWF (261 aa)) is the Protein kinase domain. ATP-binding positions include 444–452 (LGVGGFGRV) and K468. The short motif at 461–473 (KSKTYALKALKKK) is the Nuclear localization signal element. The active-site Proton acceptor is D562. Residues 699–749 (MGFDWEGLRTKTLKPPILPKVNNPADVTNFDNYPPDNDVPPDEFSGWDEGF) enclose the AGC-kinase C-terminal domain. The disordered stretch occupies residues 723–749 (ADVTNFDNYPPDNDVPPDEFSGWDEGF).

The protein belongs to the protein kinase superfamily. AGC Ser/Thr protein kinase family. cGMP subfamily. Mg(2+) serves as cofactor. Autophosphorylated.

It localises to the cytoplasm. The protein localises to the nucleus. It catalyses the reaction L-seryl-[protein] + ATP = O-phospho-L-seryl-[protein] + ADP + H(+). The catalysed reaction is L-threonyl-[protein] + ATP = O-phospho-L-threonyl-[protein] + ADP + H(+). Its activity is regulated as follows. Binding of cGMP results in enzyme activation. Promotes chemoreceptor gene expression in response to increased cGMP levels by antagonizing the gene repression functions of the class II HDAC hda-4 and the mef-2 transcription factor. Regulates gene expression via recruitment of a histone deacetylase complex containing hda-2, saeg-1 and saeg-2. Represses body size and lifespan through the dbl-1 and insulin pathways, respectively. May also signal through daf-3 and/or daf-5. Role in egg-laying, dauer formation and motility. Regulates behavioral responses to various chemosensory stimuli in sensory neurons. Required for the initiation of long term adaptation to prolonged odor exposure which results in a decrease in odor seeking behavior. May regulate this process by phosphorylating tax-2, a subunit of cyclic nucleotide-gated channel tax-2/tax-4. In ASH sensory neurons, negatively regulates avoidance behavior to some bitter tastants, such as quinine, probably by phosphorylating rgs-2 and rgs-3 which are 2 regulator of G-protein signaling proteins. In AWB sensory neurons, involved in avoidance behavior to some repellent odors. In ASE left (ASEL) sensory neuron, involved in the sensing of environmental alkalinity downstream of receptor-type guanylate cyclase gcy-14. In sensory neurons, involved in the signaling pathway downstream of insulin, TGF-beta and receptor-type guanylate cyclase responsible for inducing quiescence after food intake. Might play a role in aversive olfactory learning in AWC neurons when an odor is associated with food deprivation, depending on the ins-1/age-1 signal from the AIA to the AWC neurons. Probably by regulating neuronal transmission downstream of lin-3 and receptor lin-23 and phospholipase plc-3 in ALA neurons, involved in the decrease in locomotion during the quiescent state that precedes each larval molt. The chain is cGMP-dependent protein kinase egl-4 from Caenorhabditis briggsae.